We begin with the raw amino-acid sequence, 239 residues long: ATP synthase subunit a (239 aa).

Helical transmembrane passes span 13–33 (IWFD…VFAF), 75–95 (FHLM…LGLV), 113–133 (DPIV…FFGM), 174–194 (GNIF…ASVG), and 208–230 (WVAF…SMVY).

The protein belongs to the ATPase A chain family. In terms of assembly, F-type ATPases have 2 components, CF(1) - the catalytic core - and CF(0) - the membrane proton channel. CF(1) has five subunits: alpha(3), beta(3), gamma(1), delta(1), epsilon(1). CF(0) has three main subunits: a(1), b(2) and c(9-12). The alpha and beta chains form an alternating ring which encloses part of the gamma chain. CF(1) is attached to CF(0) by a central stalk formed by the gamma and epsilon chains, while a peripheral stalk is formed by the delta and b chains.

It localises to the cell membrane. Its function is as follows. Key component of the proton channel; it plays a direct role in the translocation of protons across the membrane. The protein is ATP synthase subunit a of Enterococcus faecalis (strain ATCC 700802 / V583).